The primary structure comprises 432 residues: Enolase (432 aa).

Q163 is a binding site for (2R)-2-phosphoglycerate. E205 (proton donor) is an active-site residue. Mg(2+)-binding residues include D242, E285, and D312. 4 residues coordinate (2R)-2-phosphoglycerate: K337, R366, S367, and K388. K337 (proton acceptor) is an active-site residue.

The protein belongs to the enolase family. It depends on Mg(2+) as a cofactor.

It is found in the cytoplasm. The protein resides in the secreted. The protein localises to the cell surface. The catalysed reaction is (2R)-2-phosphoglycerate = phosphoenolpyruvate + H2O. It participates in carbohydrate degradation; glycolysis; pyruvate from D-glyceraldehyde 3-phosphate: step 4/5. Functionally, catalyzes the reversible conversion of 2-phosphoglycerate (2-PG) into phosphoenolpyruvate (PEP). It is essential for the degradation of carbohydrates via glycolysis. The polypeptide is Enolase (Desulfovibrio desulfuricans (strain ATCC 27774 / DSM 6949 / MB)).